We begin with the raw amino-acid sequence, 364 residues long: GDP-perosamine synthase (364 aa).

Position 183 is an N6-(pyridoxal phosphate)lysine (K183).

This sequence belongs to the DegT/DnrJ/EryC1 family. Homodecamer. Pyridoxal 5'-phosphate serves as cofactor.

The catalysed reaction is GDP-alpha-D-perosamine + 2-oxoglutarate = GDP-4-dehydro-alpha-D-rhamnose + L-glutamate. It participates in bacterial outer membrane biogenesis; LPS O-antigen biosynthesis. Divalent ions have no significant effect on activity. Catalyzes the synthesis of GDP-perosamine from GDP-4-keto-6-deoxy-D-mannose and L-glutamate. Can use only L-glutamate as amino donor. In Escherichia coli O157:H7, this protein is GDP-perosamine synthase.